The sequence spans 637 residues: Chaperone protein HtpG (637 aa).

Positions 1 to 345 (MSHQETHGFQ…SNDLPLNVSR (345 aa)) are a; substrate-binding. The b stretch occupies residues 346-562 (EILQDNKVTR…EGEMSSQMIK (217 aa)). The c stretch occupies residues 563–637 (LMQAAGQPVP…VNQMLLKSVG (75 aa)).

Belongs to the heat shock protein 90 family. In terms of assembly, homodimer.

The protein localises to the cytoplasm. Its function is as follows. Molecular chaperone. Has ATPase activity. This chain is Chaperone protein HtpG, found in Shewanella amazonensis (strain ATCC BAA-1098 / SB2B).